Reading from the N-terminus, the 474-residue chain is Proline--tRNA ligase (474 aa).

This sequence belongs to the class-II aminoacyl-tRNA synthetase family. ProS type 3 subfamily. Homodimer.

Its subcellular location is the cytoplasm. The catalysed reaction is tRNA(Pro) + L-proline + ATP = L-prolyl-tRNA(Pro) + AMP + diphosphate. Its function is as follows. Catalyzes the attachment of proline to tRNA(Pro) in a two-step reaction: proline is first activated by ATP to form Pro-AMP and then transferred to the acceptor end of tRNA(Pro). This chain is Proline--tRNA ligase, found in Mycoplasma mycoides subsp. mycoides SC (strain CCUG 32753 / NCTC 10114 / PG1).